Reading from the N-terminus, the 471-residue chain is Putative multidrug resistance protein MdtD (471 aa).

Over 1–11 (MTDLPDSTRWR) the chain is Periplasmic. A helical transmembrane segment spans residues 12-32 (LWIVAFGFFMQSLDTTIVNTA). The Cytoplasmic portion of the chain corresponds to 33 to 48 (LPSMAQSLGESPLHMH). A helical membrane pass occupies residues 49–69 (MVIVSYVLTVAVMLPASGWLA). Residues 70–76 (DKVGVRN) lie on the Periplasmic side of the membrane. A helical transmembrane segment spans residues 77-97 (IFFTAIVLFTLGSLFCALSGT). At 98–101 (LNEL) the chain is on the cytoplasmic side. A helical transmembrane segment spans residues 102-124 (LLARALQGVGGAMMVPVGRLTVM). At 125–137 (KIVPREQYMAAMT) the chain is on the periplasmic side. The helical transmembrane segment at 138–158 (FVTLPGQVGPLLGPALGGLLV) threads the bilayer. At 159–164 (EYASWH) the chain is on the cytoplasmic side. The chain crosses the membrane as a helical span at residues 165–185 (WIFLINIPVGIIGAIATLMLM). Over 186 to 196 (PNYTMQTRRFD) the chain is Periplasmic. A helical membrane pass occupies residues 197-217 (LSGFLLLAVGMAVLTLALDGS). Residues 218–224 (KGTGLSP) lie on the Cytoplasmic side of the membrane. Residues 225–245 (LAIAGLVAVGVVALVLYLLHA) traverse the membrane as a helical segment. Over 246-262 (QNNNRALFSLKLFRTRT) the chain is Periplasmic. Residues 263-283 (FSLGLAGSFAGRIGSGMLPFM) traverse the membrane as a helical segment. Residues 284–285 (TP) are Cytoplasmic-facing. Residues 286-306 (VFLQIGLGFSPFHAGLMMIPM) traverse the membrane as a helical segment. The Periplasmic segment spans residues 307–341 (VLGSMGMKRIVVQVVNRFGYRRVLVATTLGLSLVT). A helical membrane pass occupies residues 342–362 (LLFMTTALLGWYYVLPFVLFL). Topologically, residues 363-395 (QGMVNSTRFSSMNTLTLKDLPDNLASSGNSLLS) are cytoplasmic. A helical transmembrane segment spans residues 396–416 (MIMQLSMSIGVTIAGLLLGLF). The Periplasmic segment spans residues 417 to 430 (GSQHVSVDSGTTQT). The helical transmembrane segment at 431–451 (VFMYTWLSMASIIALPAFIFA) threads the bilayer. Residues 452–471 (RVPNDTHQNVAISRRKRSAQ) are Cytoplasmic-facing.

Belongs to the major facilitator superfamily. TCR/Tet family.

It is found in the cell inner membrane. The sequence is that of Putative multidrug resistance protein MdtD from Escherichia coli O6:K15:H31 (strain 536 / UPEC).